A 399-amino-acid polypeptide reads, in one-letter code: Glutamine synthetase 1, mitochondrial (399 aa).

A mitochondrion-targeting transit peptide spans 1–27; it reads MALRVAGLFLKKELVAPATQQLRLLRT. The region spanning 62–143 is the GS beta-grasp domain; sequence VQATYLWIDG…VLCDTYSADG (82 aa). The region spanning 150–399 is the GS catalytic domain; it reads KRAAFQAAID…AIVRTCLLNE (250 aa).

Belongs to the glutamine synthetase family. As to quaternary structure, homooctamer.

It is found in the mitochondrion. It carries out the reaction L-glutamate + NH4(+) + ATP = L-glutamine + ADP + phosphate + H(+). This is Glutamine synthetase 1, mitochondrial (Gs1) from Drosophila melanogaster (Fruit fly).